A 66-amino-acid chain; its full sequence is Toxin Tppa1 (66 aa).

In terms of domain architecture, LCN-type CS-alpha/beta spans 1–63 (KDGYLVGNDG…TWSRSTNRCG (63 aa)). 4 disulfides stabilise this stretch: Cys-11/Cys-62, Cys-15/Cys-37, Cys-23/Cys-43, and Cys-27/Cys-45.

It belongs to the long (4 C-C) scorpion toxin superfamily. Sodium channel inhibitor family. Beta subfamily. Expressed by the venom gland.

It is found in the secreted. In terms of biological role, beta toxins bind voltage-independently at site-4 of sodium channels (Nav) and shift the voltage of activation toward more negative potentials thereby affecting sodium channel activation and promoting spontaneous and repetitive firing. This Tityus pachyurus (Colombian scorpion) protein is Toxin Tppa1.